The primary structure comprises 659 residues: MFQDNPLLAQLKQQIHDSKEQVEGVVKSTDKAYGFLECDKKTYFIAPPSMKKVMHGDKIKATIEKQGDKEQAEPESLIEPMLTRFIAKVRFNKDKKLQVLVDHPNINQPIGAQQAKSVKEELQEGDWVVANLKTHPLRDDRFFYATINQFICRAEDELAPWWVTLARHEQSRYPVRGAEPYEMLDQKTRENLTALHFVTIDSESTMDMDDALYIEPIAQNSTQTGWKLVVAIADPTAYIALDSQIEQEAKQRCFTNYLPGFNIPMLPRELSDELCSLIANETRPALVCYIETDLAGNITAKPNFVSAYVQSKAKLAYNKVSDYLEQADNAWQPEMPEIAQQIHWLHQFTKARIQWRKTHSLFFKEKPDYTFVLAENGKVQEIKAEYRRIANQIVEEAMIIANICAAQFLHEQAKTGIFNTHSGFDKKFLENAHNFLMANLANEQNQTELAERYSVENLATLNGYCQMRHDIEPIESDYLELRLRRYLTFAEFKSELAPHFGLGLEGYATWTSPIRKYSDMVNHRLIKAVLAKQPYEKPQNDVLARLQEARRQNRLVERDIADWLYCRYLADKVASNAEFEAEVQDVMRAGLRVQLLENGASLFIPAATLHNNKEEIQLNPDELALYIKGDRTYKIGDIVKVKLTEVKEATRSIVGEILQ.

In terms of domain architecture, RNB spans Arg-189–Ala-531. The 83-residue stretch at Asn-576–Leu-658 folds into the S1 motif domain.

The protein belongs to the RNR ribonuclease family. RNase II subfamily.

The protein resides in the cytoplasm. The catalysed reaction is Exonucleolytic cleavage in the 3'- to 5'-direction to yield nucleoside 5'-phosphates.. Its function is as follows. Involved in mRNA degradation. Hydrolyzes single-stranded polyribonucleotides processively in the 3' to 5' direction. The chain is Exoribonuclease 2 from Haemophilus influenzae (strain PittGG).